A 284-amino-acid polypeptide reads, in one-letter code: 4-hydroxybenzoate octaprenyltransferase (284 aa).

The next 9 membrane-spanning stretches (helical) occupy residues 19–39, 42–62, 85–105, 107–127, 134–154, 165–185, 211–231, 233–253, and 261–281; these read IPILLILWPTLTALVLASHGL, ISYLVIFTIGVVVMRTVGCII, GQLSIKNAIWLCISLTLVAFI, VLFLNLYTILLSFVALFLAIL, FFAIPQLILGLAFNFGIFMAF, AWIFYIATICWTIAYDTIYAL, ILLFNFLSLLLLIILGIYCDF, SFFYLGVVICSLFFVRNYFLY, and CINAFSANHWIGLIIFIIAVI.

Belongs to the UbiA prenyltransferase family. Requires Mg(2+) as cofactor.

Its subcellular location is the cell inner membrane. The enzyme catalyses all-trans-octaprenyl diphosphate + 4-hydroxybenzoate = 4-hydroxy-3-(all-trans-octaprenyl)benzoate + diphosphate. Its pathway is cofactor biosynthesis; ubiquinone biosynthesis. In terms of biological role, catalyzes the prenylation of para-hydroxybenzoate (PHB) with an all-trans polyprenyl group. Mediates the second step in the final reaction sequence of ubiquinone-8 (UQ-8) biosynthesis, which is the condensation of the polyisoprenoid side chain with PHB, generating the first membrane-bound Q intermediate 3-octaprenyl-4-hydroxybenzoate. This Francisella tularensis subsp. tularensis (strain FSC 198) protein is 4-hydroxybenzoate octaprenyltransferase.